The chain runs to 119 residues: Large ribosomal subunit protein bL20 (119 aa).

This sequence belongs to the bacterial ribosomal protein bL20 family.

Its function is as follows. Binds directly to 23S ribosomal RNA and is necessary for the in vitro assembly process of the 50S ribosomal subunit. It is not involved in the protein synthesizing functions of that subunit. This Streptococcus equi subsp. equi (strain 4047) protein is Large ribosomal subunit protein bL20.